A 561-amino-acid chain; its full sequence is Dihydroxy-acid dehydratase (561 aa).

Cys50 contacts [2Fe-2S] cluster. Residue Asp82 participates in Mg(2+) binding. Cys123 contacts [2Fe-2S] cluster. Mg(2+) contacts are provided by Asp124 and Lys125. At Lys125 the chain carries N6-carboxylysine. Cys195 lines the [2Fe-2S] cluster pocket. Glu447 contacts Mg(2+). The Proton acceptor role is filled by Ser473.

This sequence belongs to the IlvD/Edd family. Homodimer. [2Fe-2S] cluster serves as cofactor. The cofactor is Mg(2+).

The catalysed reaction is (2R)-2,3-dihydroxy-3-methylbutanoate = 3-methyl-2-oxobutanoate + H2O. It carries out the reaction (2R,3R)-2,3-dihydroxy-3-methylpentanoate = (S)-3-methyl-2-oxopentanoate + H2O. The protein operates within amino-acid biosynthesis; L-isoleucine biosynthesis; L-isoleucine from 2-oxobutanoate: step 3/4. It functions in the pathway amino-acid biosynthesis; L-valine biosynthesis; L-valine from pyruvate: step 3/4. Its function is as follows. Functions in the biosynthesis of branched-chain amino acids. Catalyzes the dehydration of (2R,3R)-2,3-dihydroxy-3-methylpentanoate (2,3-dihydroxy-3-methylvalerate) into 2-oxo-3-methylpentanoate (2-oxo-3-methylvalerate) and of (2R)-2,3-dihydroxy-3-methylbutanoate (2,3-dihydroxyisovalerate) into 2-oxo-3-methylbutanoate (2-oxoisovalerate), the penultimate precursor to L-isoleucine and L-valine, respectively. This is Dihydroxy-acid dehydratase from Crocosphaera subtropica (strain ATCC 51142 / BH68) (Cyanothece sp. (strain ATCC 51142)).